The primary structure comprises 317 residues: MSQPTPAVRTFQDLILALQQYWAEQGCVVLQPYDMEVGAGTFHTATFLRAIGPETWNAAYVQPSRRPTDGRYGENPNRLQHYYQFQVVLKPNPENFQELYLGSLKHVGLDPLVHDIRFVEDNWESPTLGAWGLGWEVWLNGMEVTQFTYFQQAGGIECYPVTGEITYGLERLAMYLQGVDSVYDLVWADGPFGKVTYGDVFHQNEVEQSTYNFEHANVEKLFELFDFYESEAKRLIELDQPLPLPSYEMVLKASHTFNLLDARRAISVTARQQYILRVRTLARSVAQAYLLARAKLGFPMATPDLRDEVLAKLEAAQ.

Belongs to the class-II aminoacyl-tRNA synthetase family. As to quaternary structure, tetramer of two alpha and two beta subunits.

It is found in the cytoplasm. It carries out the reaction tRNA(Gly) + glycine + ATP = glycyl-tRNA(Gly) + AMP + diphosphate. This is Glycine--tRNA ligase alpha subunit from Pseudomonas fluorescens (strain ATCC BAA-477 / NRRL B-23932 / Pf-5).